The sequence spans 488 residues: Protein nucleotidyltransferase YdiU (488 aa).

ATP-binding residues include glycine 91, glycine 93, arginine 94, lysine 114, aspartate 126, glycine 127, arginine 177, and arginine 184. The interval 108 to 127 (RFDIQLKGSGPTPYSRRGDG) is disordered. The Proton acceptor role is filled by aspartate 253. Mg(2+) is bound by residues asparagine 254 and aspartate 263. Residue aspartate 263 participates in ATP binding.

It belongs to the SELO family. The cofactor is Mg(2+). It depends on Mn(2+) as a cofactor.

It carries out the reaction L-seryl-[protein] + ATP = 3-O-(5'-adenylyl)-L-seryl-[protein] + diphosphate. The enzyme catalyses L-threonyl-[protein] + ATP = 3-O-(5'-adenylyl)-L-threonyl-[protein] + diphosphate. The catalysed reaction is L-tyrosyl-[protein] + ATP = O-(5'-adenylyl)-L-tyrosyl-[protein] + diphosphate. It catalyses the reaction L-histidyl-[protein] + UTP = N(tele)-(5'-uridylyl)-L-histidyl-[protein] + diphosphate. It carries out the reaction L-seryl-[protein] + UTP = O-(5'-uridylyl)-L-seryl-[protein] + diphosphate. The enzyme catalyses L-tyrosyl-[protein] + UTP = O-(5'-uridylyl)-L-tyrosyl-[protein] + diphosphate. Functionally, nucleotidyltransferase involved in the post-translational modification of proteins. It can catalyze the addition of adenosine monophosphate (AMP) or uridine monophosphate (UMP) to a protein, resulting in modifications known as AMPylation and UMPylation. The protein is Protein nucleotidyltransferase YdiU of Bacillus cereus (strain AH820).